The following is a 216-amino-acid chain: Thymidine kinase (216 aa).

Residues 9–16 (GTMDCGKS) and 86–89 (DEAQ) contribute to the ATP site. E87 acts as the Proton acceptor in catalysis.

It belongs to the thymidine kinase family. As to quaternary structure, homotetramer.

It localises to the cytoplasm. The enzyme catalyses thymidine + ATP = dTMP + ADP + H(+). The polypeptide is Thymidine kinase (Streptomyces avermitilis (strain ATCC 31267 / DSM 46492 / JCM 5070 / NBRC 14893 / NCIMB 12804 / NRRL 8165 / MA-4680)).